A 283-amino-acid chain; its full sequence is Bifunctional protein FolD (283 aa).

NADP(+) contacts are provided by residues 164-166, S189, and I230; that span reads GRS.

It belongs to the tetrahydrofolate dehydrogenase/cyclohydrolase family. Homodimer.

It catalyses the reaction (6R)-5,10-methylene-5,6,7,8-tetrahydrofolate + NADP(+) = (6R)-5,10-methenyltetrahydrofolate + NADPH. The catalysed reaction is (6R)-5,10-methenyltetrahydrofolate + H2O = (6R)-10-formyltetrahydrofolate + H(+). The protein operates within one-carbon metabolism; tetrahydrofolate interconversion. In terms of biological role, catalyzes the oxidation of 5,10-methylenetetrahydrofolate to 5,10-methenyltetrahydrofolate and then the hydrolysis of 5,10-methenyltetrahydrofolate to 10-formyltetrahydrofolate. The polypeptide is Bifunctional protein FolD (Lacticaseibacillus casei (strain BL23) (Lactobacillus casei)).